The sequence spans 508 residues: Light-independent protochlorophyllide reductase subunit B (508 aa).

Residue D36 participates in [4Fe-4S] cluster binding. The active-site Proton donor is D294. A substrate-binding site is contributed by 429–430 (GM).

This sequence belongs to the ChlB/BchB/BchZ family. In terms of assembly, protochlorophyllide reductase is composed of three subunits; ChlL, ChlN and ChlB. Forms a heterotetramer of two ChlB and two ChlN subunits. Requires [4Fe-4S] cluster as cofactor.

It catalyses the reaction chlorophyllide a + oxidized 2[4Fe-4S]-[ferredoxin] + 2 ADP + 2 phosphate = protochlorophyllide a + reduced 2[4Fe-4S]-[ferredoxin] + 2 ATP + 2 H2O. It participates in porphyrin-containing compound metabolism; chlorophyll biosynthesis (light-independent). Component of the dark-operative protochlorophyllide reductase (DPOR) that uses Mg-ATP and reduced ferredoxin to reduce ring D of protochlorophyllide (Pchlide) to form chlorophyllide a (Chlide). This reaction is light-independent. The NB-protein (ChlN-ChlB) is the catalytic component of the complex. This Thermosynechococcus vestitus (strain NIES-2133 / IAM M-273 / BP-1) protein is Light-independent protochlorophyllide reductase subunit B.